The primary structure comprises 477 residues: Bifunctional protein HldE (477 aa).

A ribokinase region spans residues 1–318; sequence MKLSMPRFDQ…RAIQREEGSE (318 aa). Position 194 to 197 (194 to 197) interacts with ATP; that stretch reads NLSE. D263 is a catalytic residue. The cytidylyltransferase stretch occupies residues 343–477; that stretch reads FTNGCFDILH…EKIRKTDKAE (135 aa).

The protein in the N-terminal section; belongs to the carbohydrate kinase PfkB family. It in the C-terminal section; belongs to the cytidylyltransferase family. Homodimer.

It carries out the reaction D-glycero-beta-D-manno-heptose 7-phosphate + ATP = D-glycero-beta-D-manno-heptose 1,7-bisphosphate + ADP + H(+). It catalyses the reaction D-glycero-beta-D-manno-heptose 1-phosphate + ATP + H(+) = ADP-D-glycero-beta-D-manno-heptose + diphosphate. It participates in nucleotide-sugar biosynthesis; ADP-L-glycero-beta-D-manno-heptose biosynthesis; ADP-L-glycero-beta-D-manno-heptose from D-glycero-beta-D-manno-heptose 7-phosphate: step 1/4. It functions in the pathway nucleotide-sugar biosynthesis; ADP-L-glycero-beta-D-manno-heptose biosynthesis; ADP-L-glycero-beta-D-manno-heptose from D-glycero-beta-D-manno-heptose 7-phosphate: step 3/4. Catalyzes the phosphorylation of D-glycero-D-manno-heptose 7-phosphate at the C-1 position to selectively form D-glycero-beta-D-manno-heptose-1,7-bisphosphate. Functionally, catalyzes the ADP transfer from ATP to D-glycero-beta-D-manno-heptose 1-phosphate, yielding ADP-D-glycero-beta-D-manno-heptose. The sequence is that of Bifunctional protein HldE from Pseudomonas fluorescens (strain ATCC BAA-477 / NRRL B-23932 / Pf-5).